Reading from the N-terminus, the 131-residue chain is DNA-directed RNA polymerase subunit omega (131 aa).

This sequence belongs to the RNA polymerase subunit omega family. In terms of assembly, the RNAP catalytic core consists of 2 alpha, 1 beta, 1 beta' and 1 omega subunit. When a sigma factor is associated with the core the holoenzyme is formed, which can initiate transcription.

It carries out the reaction RNA(n) + a ribonucleoside 5'-triphosphate = RNA(n+1) + diphosphate. Functionally, promotes RNA polymerase assembly. Latches the N- and C-terminal regions of the beta' subunit thereby facilitating its interaction with the beta and alpha subunits. The polypeptide is DNA-directed RNA polymerase subunit omega (Chelativorans sp. (strain BNC1)).